Here is a 283-residue protein sequence, read N- to C-terminus: Pantothenate synthetase (283 aa).

30 to 37 (MGYLHDGH) contributes to the ATP binding site. The active-site Proton donor is His37. A (R)-pantoate-binding site is contributed by Gln61. Gln61 is a binding site for beta-alanine. ATP is bound at residue 148 to 151 (GQKD). (R)-pantoate is bound at residue Gln154. Residue 185–188 (MSSR) participates in ATP binding.

It belongs to the pantothenate synthetase family. As to quaternary structure, homodimer.

It is found in the cytoplasm. The enzyme catalyses (R)-pantoate + beta-alanine + ATP = (R)-pantothenate + AMP + diphosphate + H(+). Its pathway is cofactor biosynthesis; (R)-pantothenate biosynthesis; (R)-pantothenate from (R)-pantoate and beta-alanine: step 1/1. Catalyzes the condensation of pantoate with beta-alanine in an ATP-dependent reaction via a pantoyl-adenylate intermediate. The polypeptide is Pantothenate synthetase (Carboxydothermus hydrogenoformans (strain ATCC BAA-161 / DSM 6008 / Z-2901)).